The sequence spans 209 residues: Orotate phosphoribosyltransferase (209 aa).

5-phospho-alpha-D-ribose 1-diphosphate-binding positions include Arg-96, Lys-100, His-102, and Glu-122–Ser-130. Ser-126 provides a ligand contact to orotate.

This sequence belongs to the purine/pyrimidine phosphoribosyltransferase family. PyrE subfamily. Homodimer. Requires Mg(2+) as cofactor.

The enzyme catalyses orotidine 5'-phosphate + diphosphate = orotate + 5-phospho-alpha-D-ribose 1-diphosphate. The protein operates within pyrimidine metabolism; UMP biosynthesis via de novo pathway; UMP from orotate: step 1/2. In terms of biological role, catalyzes the transfer of a ribosyl phosphate group from 5-phosphoribose 1-diphosphate to orotate, leading to the formation of orotidine monophosphate (OMP). This is Orotate phosphoribosyltransferase from Streptococcus pyogenes serotype M1.